We begin with the raw amino-acid sequence, 345 residues long: Ribosomal RNA small subunit methyltransferase H (345 aa).

Residues Gly-47–Tyr-49, Asp-65, Phe-92, Asp-113, and Gln-120 contribute to the S-adenosyl-L-methionine site. Residues Glu-296–Arg-345 are disordered.

It belongs to the methyltransferase superfamily. RsmH family.

The protein resides in the cytoplasm. The catalysed reaction is cytidine(1402) in 16S rRNA + S-adenosyl-L-methionine = N(4)-methylcytidine(1402) in 16S rRNA + S-adenosyl-L-homocysteine + H(+). In terms of biological role, specifically methylates the N4 position of cytidine in position 1402 (C1402) of 16S rRNA. The protein is Ribosomal RNA small subunit methyltransferase H of Xanthobacter autotrophicus (strain ATCC BAA-1158 / Py2).